Reading from the N-terminus, the 278-residue chain is Small ribosomal subunit protein uS2 (278 aa).

Ser-2 is modified (N-acetylserine). Positions 258–278 are disordered; sequence TNEGKTAADEWATGAQTQSNW.

This sequence belongs to the universal ribosomal protein uS2 family. As to quaternary structure, component of the small ribosomal subunit. Mature ribosomes consist of a small (40S) and a large (60S) subunit. The 40S subunit contains about 33 different proteins and 1 molecule of RNA (18S). The 60S subunit contains about 49 different proteins and 3 molecules of RNA (28S, 5.8S and 5S). Interacts with rps-21.

It localises to the cytoplasm. In terms of biological role, required for the assembly and/or stability of the 40S ribosomal subunit. Required for the processing of the 20S rRNA-precursor to mature 18S rRNA in a late step of the maturation of 40S ribosomal subunits. The polypeptide is Small ribosomal subunit protein uS2 (Caenorhabditis briggsae).